The following is a 507-amino-acid chain: Alkyl hydroperoxide reductase subunit F (507 aa).

An FAD-binding site is contributed by 207-222; it reads DVLIVGGGPASGSAAI. C335 and C338 are disulfide-bonded. 347 to 361 contacts NAD(+); the sequence is DVAVIGGGNSGVEAA. 467–477 contributes to the FAD binding site; that stretch reads TNVPGIFAAGD.

It belongs to the class-II pyridine nucleotide-disulfide oxidoreductase family. In terms of assembly, homodimer. The cofactor is FAD.

Its function is as follows. Serves to protect the cell against DNA damage by alkyl hydroperoxides. It can use either NADH or NADPH as electron donor for direct reduction of redox dyes or of alkyl hydroperoxides when combined with the AhpC protein. This Staphylococcus epidermidis (strain ATCC 35984 / DSM 28319 / BCRC 17069 / CCUG 31568 / BM 3577 / RP62A) protein is Alkyl hydroperoxide reductase subunit F (ahpF).